A 389-amino-acid polypeptide reads, in one-letter code: S-adenosylmethionine synthase (389 aa).

Histidine 17 lines the ATP pocket. Aspartate 19 provides a ligand contact to Mg(2+). Glutamate 45 contacts K(+). The L-methionine site is built by glutamate 58 and glutamine 101. The tract at residues 101 to 111 is flexible loop; that stretch reads QSPDIAQGVTE. ATP contacts are provided by residues 168–170, 234–235, aspartate 243, 249–250, alanine 266, and lysine 270; these read DSK, RF, and RK. Aspartate 243 is a binding site for L-methionine. Lysine 274 lines the L-methionine pocket.

Belongs to the AdoMet synthase family. As to quaternary structure, homotetramer; dimer of dimers. Mg(2+) is required as a cofactor. K(+) serves as cofactor.

It is found in the cytoplasm. It carries out the reaction L-methionine + ATP + H2O = S-adenosyl-L-methionine + phosphate + diphosphate. The protein operates within amino-acid biosynthesis; S-adenosyl-L-methionine biosynthesis; S-adenosyl-L-methionine from L-methionine: step 1/1. Catalyzes the formation of S-adenosylmethionine (AdoMet) from methionine and ATP. The overall synthetic reaction is composed of two sequential steps, AdoMet formation and the subsequent tripolyphosphate hydrolysis which occurs prior to release of AdoMet from the enzyme. The chain is S-adenosylmethionine synthase from Geotalea uraniireducens (strain Rf4) (Geobacter uraniireducens).